A 385-amino-acid chain; its full sequence is NADH-quinone oxidoreductase subunit H (385 aa).

The next 8 membrane-spanning stretches (helical) occupy residues 14 to 34 (GLKL…LVWL), 80 to 100 (FLYY…FSAI), 130 to 150 (IGVG…TLLM), 172 to 192 (ISYE…YGTF), 219 to 239 (LPNW…SAAF), 280 to 300 (MMIA…IPYV), 325 to 345 (LIHF…FIWV), and 365 to 385 (MLPW…IASL).

The protein belongs to the complex I subunit 1 family. In terms of assembly, NDH-1 is composed of 14 different subunits. Subunits NuoA, H, J, K, L, M, N constitute the membrane sector of the complex.

The protein resides in the cell inner membrane. The catalysed reaction is a quinone + NADH + 5 H(+)(in) = a quinol + NAD(+) + 4 H(+)(out). In terms of biological role, NDH-1 shuttles electrons from NADH, via FMN and iron-sulfur (Fe-S) centers, to quinones in the respiratory chain. The immediate electron acceptor for the enzyme in this species is believed to be ubiquinone. Couples the redox reaction to proton translocation (for every two electrons transferred, four hydrogen ions are translocated across the cytoplasmic membrane), and thus conserves the redox energy in a proton gradient. This subunit may bind ubiquinone. The sequence is that of NADH-quinone oxidoreductase subunit H from Bdellovibrio bacteriovorus (strain ATCC 15356 / DSM 50701 / NCIMB 9529 / HD100).